Reading from the N-terminus, the 399-residue chain is Phosphoglycerate kinase (399 aa).

Residues 24–26, arginine 39, 62–65, arginine 121, and arginine 154 contribute to the substrate site; these read DYN and HLGR. ATP is bound by residues lysine 204, glycine 295, glutamate 326, and 355–358; that span reads GGDS.

This sequence belongs to the phosphoglycerate kinase family. As to quaternary structure, monomer.

The protein resides in the cytoplasm. The enzyme catalyses (2R)-3-phosphoglycerate + ATP = (2R)-3-phospho-glyceroyl phosphate + ADP. The protein operates within carbohydrate degradation; glycolysis; pyruvate from D-glyceraldehyde 3-phosphate: step 2/5. This Elusimicrobium minutum (strain Pei191) protein is Phosphoglycerate kinase.